Here is a 302-residue protein sequence, read N- to C-terminus: Sulfate adenylyltransferase subunit 2 (302 aa).

The tract at residues 279–302 is disordered; it reads ERQGRAIDHDSSGSMELKKRQGYF. The span at 280-302 shows a compositional bias: basic and acidic residues; sequence RQGRAIDHDSSGSMELKKRQGYF.

This sequence belongs to the PAPS reductase family. CysD subfamily. In terms of assembly, heterodimer composed of CysD, the smaller subunit, and CysN.

The enzyme catalyses sulfate + ATP + H(+) = adenosine 5'-phosphosulfate + diphosphate. The protein operates within sulfur metabolism; hydrogen sulfide biosynthesis; sulfite from sulfate: step 1/3. With CysN forms the ATP sulfurylase (ATPS) that catalyzes the adenylation of sulfate producing adenosine 5'-phosphosulfate (APS) and diphosphate, the first enzymatic step in sulfur assimilation pathway. APS synthesis involves the formation of a high-energy phosphoric-sulfuric acid anhydride bond driven by GTP hydrolysis by CysN coupled to ATP hydrolysis by CysD. The chain is Sulfate adenylyltransferase subunit 2 from Aliivibrio fischeri (strain ATCC 700601 / ES114) (Vibrio fischeri).